A 106-amino-acid chain; its full sequence is Ferredoxin (106 aa).

Residues Cys-8 and Cys-16 each contribute to the [3Fe-4S] cluster site. [4Fe-4S] cluster is bound by residues Cys-20, Cys-39, Cys-42, and Cys-45. Residues 30-59 (RMLYIHPDECVDCGACEPVCPVEAIYYEDD) form the 4Fe-4S ferredoxin-type domain. Cys-49 contacts [3Fe-4S] cluster. Residues 81–106 (PGGASKVGQTDNDPQAIKDLPPQGED) are disordered.

The cofactor is [4Fe-4S] cluster. Requires [3Fe-4S] cluster as cofactor.

In terms of biological role, ferredoxins are iron-sulfur proteins that transfer electrons in a wide variety of metabolic reactions. In Mycolicibacterium smegmatis (Mycobacterium smegmatis), this protein is Ferredoxin (fdxA).